The primary structure comprises 355 residues: Phenylalanine--tRNA ligase alpha subunit (355 aa).

Glutamate 273 contacts Mg(2+).

It belongs to the class-II aminoacyl-tRNA synthetase family. Phe-tRNA synthetase alpha subunit type 1 subfamily. As to quaternary structure, tetramer of two alpha and two beta subunits. Mg(2+) is required as a cofactor.

It is found in the cytoplasm. It catalyses the reaction tRNA(Phe) + L-phenylalanine + ATP = L-phenylalanyl-tRNA(Phe) + AMP + diphosphate + H(+). This Bifidobacterium animalis subsp. lactis (strain AD011) protein is Phenylalanine--tRNA ligase alpha subunit.